A 360-amino-acid polypeptide reads, in one-letter code: Variable large protein 18 (360 aa).

The signal sequence occupies residues 1-26 (MRKRISAIINKLNISIMMMIVVLMIG). Residue Cys-27 is the site of N-palmitoyl cysteine attachment. The S-diacylglycerol cysteine moiety is linked to residue Cys-27.

Belongs to the variable large protein (Vlp) family. Alpha subfamily.

The protein resides in the cell outer membrane. The Vlp and Vsp proteins are antigenically distinct proteins, only one vlp or vsp gene is transcriptionally active at any one time. Switching between these genes is a mechanism of host immune response evasion. In Borrelia hermsii, this protein is Variable large protein 18.